The primary structure comprises 135 residues: uncharacterized protein (135 aa).

Belongs to the transcriptional regulatory CopG/NikR family.

This is an uncharacterized protein from Methanocaldococcus jannaschii (strain ATCC 43067 / DSM 2661 / JAL-1 / JCM 10045 / NBRC 100440) (Methanococcus jannaschii).